The following is a 509-amino-acid chain: Taxoid 14-beta-hydroxylase (509 aa).

Helical transmembrane passes span 20–40, 186–206, and 218–238; these read AILF…LLFL, SVVA…FFNI, and LLEI…GFAY. Position 443 (C443) interacts with heme.

The protein belongs to the cytochrome P450 family.

Its subcellular location is the microsome membrane. The catalysed reaction is 10beta-hydroxytaxa-4(20),11-dien-5alpha-yl acetate + NADPH + O2 + H(+) = 10beta,14beta-dihydroxytaxa-4(20),11-dien-5alpha-yl acetate + NADP(+) + H2O. The protein operates within alkaloid biosynthesis; taxol biosynthesis. Functionally, catalyzes the conversion of 5-alpha-acetoxy-10beta-ol to 5-alpha-acetoxy-10beta,14beta-dihydroxy taxadiene. Also acts on taxa-4(20),11-dien-5-alpha-yl acetate. The polypeptide is Taxoid 14-beta-hydroxylase (Taxus cuspidata (Japanese yew)).